The following is a 422-amino-acid chain: MSAEKITQSKDGLNVPNEPIIPFIIGDGIGPDIWKAASRVIDAAVEKAYNGEKRIEWKEVLAGQKAYDETGEWLPQETLETIKEYLIAVKGPLTTPIGGGIRSLNVALRQELDLFTCLRPVRWFKGVPSPVKRPEDVDMVIFRENTEDIYAGIEFKQGTSEVKKVIDFLQNEMGATNIRFPETSGIGIKPVSKEGTERLVRAAIQYALDNNRKSVTLVHKGNIMKFTEGSFKQWGYDLAHNEFGDKVFTWQQYDEIVEQKGKDAANEAQSKAEQEGKIIIKDSIADIFLQQILTRPAEHDVVATMNLNGDYISDALAAQVGGIGIAPGANINYETGHAIFEATHGTAPKYAGLNKVNPSSEILSSVLMLEHLGWQEAADKITDSIEATIASKIVTYDFARLMDGAKEVSTSDFADELIKNIR.

Position 94 (Thr-94) interacts with NADP(+). D-threo-isocitrate contacts are provided by Ser-103, Asn-105, Arg-109, Arg-119, and Arg-143. Asp-310 lines the Mg(2+) pocket. NADP(+) contacts are provided by residues 344 to 350, Asn-357, Tyr-396, and Arg-400; that span reads HGTAPKY.

The protein belongs to the isocitrate and isopropylmalate dehydrogenases family. Homodimer. Mg(2+) serves as cofactor. It depends on Mn(2+) as a cofactor.

The enzyme catalyses D-threo-isocitrate + NADP(+) = 2-oxoglutarate + CO2 + NADPH. Its function is as follows. Catalyzes the oxidative decarboxylation of isocitrate to 2-oxoglutarate and carbon dioxide with the concomitant reduction of NADP(+). This Staphylococcus epidermidis (strain ATCC 35984 / DSM 28319 / BCRC 17069 / CCUG 31568 / BM 3577 / RP62A) protein is Isocitrate dehydrogenase [NADP] (icd).